The chain runs to 414 residues: Snake venom metalloproteinase (414 aa).

Positions 1–20 (MIEVLLVTICLAVFPYQGSS) are cleaved as a signal peptide. A propeptide spanning residues 21 to 190 (IILESGNVND…KASDLNFNSD (170 aa)) is cleaved from the precursor. Q191 is modified (pyrrolidone carboxylic acid). Residues 197-393 (RYVELVIVAD…YKPQCILNKP (197 aa)) enclose the Peptidase M12B domain. Positions 200 and 284 each coordinate Ca(2+). Disulfide bonds link C308-C388 and C348-C355. Residue H333 coordinates Zn(2+). Residue E334 is part of the active site. H337 and H343 together coordinate Zn(2+). Residues C388 and N391 each contribute to the Ca(2+) site. Residues 394–414 (LRIDPVSTPVSGNELLEAGEE) constitute a propeptide that is removed on maturation.

This sequence belongs to the venom metalloproteinase (M12B) family. P-I subfamily. Monomer. It depends on Zn(2+) as a cofactor. Expressed by the venom gland.

Its subcellular location is the secreted. Snake venom metalloproteinase that impairs hemostasis in the envenomed animal. The chain is Snake venom metalloproteinase from Crotalus molossus molossus (Northern black-tailed rattlesnake).